A 610-amino-acid polypeptide reads, in one-letter code: Elongation factor 4 (610 aa).

The tr-type G domain maps to 11-193 (EKIRNFSIIA…QIVEKVPAPT (183 aa)). GTP-binding positions include 23–28 (DHGKST) and 140–143 (NKID).

It belongs to the TRAFAC class translation factor GTPase superfamily. Classic translation factor GTPase family. LepA subfamily.

It is found in the cell membrane. It catalyses the reaction GTP + H2O = GDP + phosphate + H(+). Functionally, required for accurate and efficient protein synthesis under certain stress conditions. May act as a fidelity factor of the translation reaction, by catalyzing a one-codon backward translocation of tRNAs on improperly translocated ribosomes. Back-translocation proceeds from a post-translocation (POST) complex to a pre-translocation (PRE) complex, thus giving elongation factor G a second chance to translocate the tRNAs correctly. Binds to ribosomes in a GTP-dependent manner. The sequence is that of Elongation factor 4 from Streptococcus pyogenes serotype M1.